Consider the following 443-residue polypeptide: Thymidine phosphorylase (443 aa).

The protein belongs to the thymidine/pyrimidine-nucleoside phosphorylase family. In terms of assembly, homodimer.

The enzyme catalyses thymidine + phosphate = 2-deoxy-alpha-D-ribose 1-phosphate + thymine. It functions in the pathway pyrimidine metabolism; dTMP biosynthesis via salvage pathway; dTMP from thymine: step 1/2. Its function is as follows. The enzymes which catalyze the reversible phosphorolysis of pyrimidine nucleosides are involved in the degradation of these compounds and in their utilization as carbon and energy sources, or in the rescue of pyrimidine bases for nucleotide synthesis. This Shewanella sp. (strain MR-7) protein is Thymidine phosphorylase.